The following is a 94-amino-acid chain: Putative septation protein SpoVG (94 aa).

This sequence belongs to the SpoVG family.

Its function is as follows. Could be involved in septation. The sequence is that of Putative septation protein SpoVG from Acholeplasma laidlawii (strain PG-8A).